Here is a 322-residue protein sequence, read N- to C-terminus: Ferredoxin--NADP reductase (322 aa).

FAD is bound by residues T12, E31, Q39, Y44, A86, F119, and T317.

The protein belongs to the ferredoxin--NADP reductase type 2 family. In terms of assembly, homodimer. FAD serves as cofactor.

The catalysed reaction is 2 reduced [2Fe-2S]-[ferredoxin] + NADP(+) + H(+) = 2 oxidized [2Fe-2S]-[ferredoxin] + NADPH. This chain is Ferredoxin--NADP reductase, found in Acholeplasma laidlawii (strain PG-8A).